The sequence spans 236 residues: Small ribosomal subunit protein uS2c (236 aa).

The protein belongs to the universal ribosomal protein uS2 family.

It localises to the plastid. Its subcellular location is the chloroplast. The polypeptide is Small ribosomal subunit protein uS2c (rps2) (Vitis vinifera (Grape)).